The primary structure comprises 580 residues: CDKN2A-interacting protein (580 aa).

Position 2 is an N-acetylalanine (Ala2). The 115-residue stretch at 19-133 (VEALRCDGET…KVKKRGISSS (115 aa)) folds into the XRN2-binding (XTBD) domain. Positions 129–356 (GISSSNEGVE…PKSSSSTNTS (228 aa)) are disordered. Ser131 is subject to Phosphoserine. The span at 155-167 (EQDHAKTSAKTER) shows a compositional bias: basic and acidic residues. The segment covering 168–179 (ASAQQENSSTCI) has biased composition (polar residues). A Glycyl lysine isopeptide (Lys-Gly) (interchain with G-Cter in SUMO1) cross-link involves residue Lys184. The span at 185 to 228 (SESGNSARSSGISSQNSSTSDGDRSVSSQSSSSVSSQVTTAGSG) shows a compositional bias: low complexity. Residues 231–240 (SEAEAPDKHG) are compositionally biased toward basic and acidic residues. Ser241 carries the post-translational modification Phosphoserine. Residues 248–269 (LKSSVNSHMTQSTDSRQQSGSP) show a composition bias toward polar residues. 2 stretches are compositionally biased toward low complexity: residues 274 to 313 (LEGS…PSSE) and 321 to 356 (SKTS…TNTS). Thr346 carries the phosphothreonine modification. Ser389 bears the Phosphoserine mark. One can recognise a DRBM domain in the interval 462 to 537 (NHGELLNAAI…SREALKLFLK (76 aa)).

This sequence belongs to the CARF family. In terms of assembly, interacts with CDKN2A/p14ARF, p53/TP53 and MDM2. Interacts with CHEK2 and MAPK3. Interacts with XRN2. In terms of processing, may be ubiquitinated. Ubiquitously expressed.

Its subcellular location is the nucleus. The protein resides in the nucleoplasm. Regulates DNA damage response in a dose-dependent manner through a number of signaling pathways involved in cell proliferation, apoptosis and senescence. This is CDKN2A-interacting protein (CDKN2AIP) from Homo sapiens (Human).